A 141-amino-acid chain; its full sequence is Large ribosomal subunit protein uL11 (141 aa).

Belongs to the universal ribosomal protein uL11 family. In terms of assembly, part of the ribosomal stalk of the 50S ribosomal subunit. Interacts with L10 and the large rRNA to form the base of the stalk. L10 forms an elongated spine to which L12 dimers bind in a sequential fashion forming a multimeric L10(L12)X complex. In terms of processing, one or more lysine residues are methylated.

In terms of biological role, forms part of the ribosomal stalk which helps the ribosome interact with GTP-bound translation factors. This chain is Large ribosomal subunit protein uL11, found in Campylobacter lari (strain RM2100 / D67 / ATCC BAA-1060).